A 78-amino-acid chain; its full sequence is Protein SlyX homolog (78 aa).

The protein belongs to the SlyX family.

In Xanthomonas oryzae pv. oryzae (strain MAFF 311018), this protein is Protein SlyX homolog.